A 396-amino-acid polypeptide reads, in one-letter code: Ribosomal RNA large subunit methyltransferase I (396 aa).

The PUA domain occupies 2–81 (SVRLVLAKGR…ESIDIAFFSR (80 aa)).

The protein belongs to the methyltransferase superfamily. RlmI family.

Its subcellular location is the cytoplasm. The enzyme catalyses cytidine(1962) in 23S rRNA + S-adenosyl-L-methionine = 5-methylcytidine(1962) in 23S rRNA + S-adenosyl-L-homocysteine + H(+). In terms of biological role, specifically methylates the cytosine at position 1962 (m5C1962) of 23S rRNA. This is Ribosomal RNA large subunit methyltransferase I from Shigella boydii serotype 18 (strain CDC 3083-94 / BS512).